Here is a 542-residue protein sequence, read N- to C-terminus: Peptide chain release factor 3 (542 aa).

Residues 14–283 (DKRRNFAIIS…AFLEYALKPG (270 aa)) enclose the tr-type G domain. Residues 23–30 (SHPDAGKT), 91–95 (DTPGH), and 145–148 (NKMD) contribute to the GTP site.

The protein belongs to the TRAFAC class translation factor GTPase superfamily. Classic translation factor GTPase family. PrfC subfamily.

Its subcellular location is the cytoplasm. Functionally, increases the formation of ribosomal termination complexes and stimulates activities of RF-1 and RF-2. It binds guanine nucleotides and has strong preference for UGA stop codons. It may interact directly with the ribosome. The stimulation of RF-1 and RF-2 is significantly reduced by GTP and GDP, but not by GMP. This chain is Peptide chain release factor 3, found in Trichodesmium erythraeum (strain IMS101).